Here is a 94-residue protein sequence, read N- to C-terminus: ESAT-6-like protein EsxL (94 aa).

This sequence belongs to the WXG100 family. ESAT-6 subfamily. Strongly interacts with EsxK to form a heterodimeric complex under reducing conditions.

It localises to the secreted. This is ESAT-6-like protein EsxL from Mycobacterium tuberculosis (strain CDC 1551 / Oshkosh).